Reading from the N-terminus, the 105-residue chain is Small ribosomal subunit protein uS10c (105 aa).

The protein belongs to the universal ribosomal protein uS10 family. Part of the 30S ribosomal subunit.

It is found in the plastid. The protein resides in the chloroplast. Involved in the binding of tRNA to the ribosomes. This is Small ribosomal subunit protein uS10c from Porphyra purpurea (Red seaweed).